The following is a 338-amino-acid chain: UDP-3-O-acylglucosamine N-acyltransferase (338 aa).

Histidine 251 acts as the Proton acceptor in catalysis.

The protein belongs to the transferase hexapeptide repeat family. LpxD subfamily. Homotrimer.

It catalyses the reaction a UDP-3-O-[(3R)-3-hydroxyacyl]-alpha-D-glucosamine + a (3R)-hydroxyacyl-[ACP] = a UDP-2-N,3-O-bis[(3R)-3-hydroxyacyl]-alpha-D-glucosamine + holo-[ACP] + H(+). The protein operates within bacterial outer membrane biogenesis; LPS lipid A biosynthesis. In terms of biological role, catalyzes the N-acylation of UDP-3-O-acylglucosamine using 3-hydroxyacyl-ACP as the acyl donor. Is involved in the biosynthesis of lipid A, a phosphorylated glycolipid that anchors the lipopolysaccharide to the outer membrane of the cell. This is UDP-3-O-acylglucosamine N-acyltransferase from Psychrobacter arcticus (strain DSM 17307 / VKM B-2377 / 273-4).